A 539-amino-acid polypeptide reads, in one-letter code: Membrane protein insertase YidC (539 aa).

5 helical membrane-spanning segments follow: residues 6 to 26 (TLLV…WQVA), 341 to 361 (SVIQ…TFIV), 416 to 436 (LGGC…YWAL), 454 to 474 (LSAQ…MFLI), and 495 to 515 (PVMF…YWLV).

It belongs to the OXA1/ALB3/YidC family. Type 1 subfamily. As to quaternary structure, interacts with the Sec translocase complex via SecD. Specifically interacts with transmembrane segments of nascent integral membrane proteins during membrane integration.

The protein resides in the cell inner membrane. In terms of biological role, required for the insertion and/or proper folding and/or complex formation of integral membrane proteins into the membrane. Involved in integration of membrane proteins that insert both dependently and independently of the Sec translocase complex, as well as at least some lipoproteins. Aids folding of multispanning membrane proteins. The protein is Membrane protein insertase YidC of Vibrio vulnificus (strain CMCP6).